Consider the following 115-residue polypeptide: Vitelline membrane protein Vm32E (115 aa).

Positions 1–17 are cleaved as a signal peptide; sequence MKIVAFTLVAFVALAGA. In terms of domain architecture, VM spans 35–72; sequence GYPAPPCPTNYLFSCQPNLAPAPCAQEAPAYGSAGAYT.

It belongs to the vitelline membrane family.

It localises to the secreted. Functionally, major early eggshell protein. The chain is Vitelline membrane protein Vm32E from Drosophila yakuba (Fruit fly).